Here is a 369-residue protein sequence, read N- to C-terminus: MKFIDEAKIEVIAGDGGNGVASFCREKFRPFGGPDGGDGGKGGSIYAVADRNINTLVDFRFAKMHKAKNGENGRGADCYGKGADDIKLRMPVGTLIIDNNDGELIADLTEHGQEVLIAKGGEGGWGNIHFKSSTNRAPRQKSEGKEGERRELRLELKVLADIGLLGMPNAGKSTFISAVSNARPKIADYPFTTLHPNLGVVRVSHEKSFVIADIPGLIEGASDGAGLGIQFLRHLQRTRLLLHIVDLAPFDNVDPVKEAKAIVKELKKYDEALFDKPRWLVLNKLDMVPEEERKKRVKDFIKRFGWKGPVFEISALTREGCSDLVTEIYEYIAVQRQAEQRTEETPQMVEEARGIDSIDPDDPRFKIID.

Residues 1–159 (MKFIDEAKIE…RELRLELKVL (159 aa)) enclose the Obg domain. The disordered stretch occupies residues 128 to 148 (IHFKSSTNRAPRQKSEGKEGE). One can recognise an OBG-type G domain in the interval 160-333 (ADIGLLGMPN…LVTEIYEYIA (174 aa)). Residues 166–173 (GMPNAGKS), 191–195 (FTTLH), 213–216 (DIPG), 283–286 (NKLD), and 314–316 (SAL) each bind GTP. The Mg(2+) site is built by Ser-173 and Thr-193.

It belongs to the TRAFAC class OBG-HflX-like GTPase superfamily. OBG GTPase family. In terms of assembly, monomer. Mg(2+) is required as a cofactor.

It localises to the cytoplasm. Its function is as follows. An essential GTPase which binds GTP, GDP and possibly (p)ppGpp with moderate affinity, with high nucleotide exchange rates and a fairly low GTP hydrolysis rate. Plays a role in control of the cell cycle, stress response, ribosome biogenesis and in those bacteria that undergo differentiation, in morphogenesis control. This is GTPase Obg from Janthinobacterium sp. (strain Marseille) (Minibacterium massiliensis).